A 542-amino-acid polypeptide reads, in one-letter code: Chaperonin GroEL (542 aa).

ATP is bound by residues 29–32 (TLGP), 86–90 (DGTTT), Gly413, and Asp493.

Belongs to the chaperonin (HSP60) family. As to quaternary structure, forms a cylinder of 14 subunits composed of two heptameric rings stacked back-to-back. Interacts with the co-chaperonin GroES.

The protein resides in the cytoplasm. It carries out the reaction ATP + H2O + a folded polypeptide = ADP + phosphate + an unfolded polypeptide.. In terms of biological role, together with its co-chaperonin GroES, plays an essential role in assisting protein folding. The GroEL-GroES system forms a nano-cage that allows encapsulation of the non-native substrate proteins and provides a physical environment optimized to promote and accelerate protein folding. The sequence is that of Chaperonin GroEL from Elusimicrobium minutum (strain Pei191).